The primary structure comprises 372 residues: Tyrosine--tRNA ligase (372 aa).

L-tyrosine is bound by residues Y37, Y169, Q173, D176, and Q191. Residues 246–250 (KMSKS) carry the 'KMSKS' region motif. K249 is an ATP binding site.

Belongs to the class-I aminoacyl-tRNA synthetase family. TyrS type 4 subfamily. In terms of assembly, homodimer.

It is found in the cytoplasm. The enzyme catalyses tRNA(Tyr) + L-tyrosine + ATP = L-tyrosyl-tRNA(Tyr) + AMP + diphosphate + H(+). In terms of biological role, catalyzes the attachment of tyrosine to tRNA(Tyr) in a two-step reaction: tyrosine is first activated by ATP to form Tyr-AMP and then transferred to the acceptor end of tRNA(Tyr). This Pyrobaculum calidifontis (strain DSM 21063 / JCM 11548 / VA1) protein is Tyrosine--tRNA ligase.